A 386-amino-acid chain; its full sequence is Alanine racemase (386 aa).

The active-site Proton acceptor; specific for D-alanine is the K38. The residue at position 38 (K38) is an N6-(pyridoxal phosphate)lysine. Residue R136 coordinates substrate. The active-site Proton acceptor; specific for L-alanine is Y267. Residue M315 participates in substrate binding.

The protein belongs to the alanine racemase family. Pyridoxal 5'-phosphate serves as cofactor.

It catalyses the reaction L-alanine = D-alanine. Its pathway is amino-acid biosynthesis; D-alanine biosynthesis; D-alanine from L-alanine: step 1/1. In terms of biological role, catalyzes the interconversion of L-alanine and D-alanine. May also act on other amino acids. This Clostridium perfringens (strain SM101 / Type A) protein is Alanine racemase (alr).